The following is a 946-amino-acid chain: C-1-tetrahydrofolate synthase, cytoplasmic (946 aa).

Residues 2 to 319 (AGQVLDGKAC…PPLPLKLLTP (318 aa)) are methylenetetrahydrofolate dehydrogenase and cyclohydrolase. Substrate contacts are provided by residues 51–55 (YVRMK) and 98–100 (VQL). 169 to 171 (GRS) is a binding site for NADP(+). Ser176 bears the Phosphoserine mark. Residue Ser194 coordinates NADP(+). 277–281 (PGGVG) provides a ligand contact to substrate. The residue at position 318 (Thr318) is a Phosphothreonine. Residues 320-946 (VPSDIDISRA…DDDGEIDGLF (627 aa)) form a formyltetrahydrofolate synthetase region. Ser322 carries the post-translational modification Phosphoserine. An ATP-binding site is contributed by 384–391 (TPLGEGKS).

This sequence in the N-terminal section; belongs to the tetrahydrofolate dehydrogenase/cyclohydrolase family. The protein in the C-terminal section; belongs to the formate--tetrahydrofolate ligase family. In terms of assembly, homodimer.

It localises to the cytoplasm. The protein resides in the nucleus. The catalysed reaction is (6R)-5,10-methylene-5,6,7,8-tetrahydrofolate + NADP(+) = (6R)-5,10-methenyltetrahydrofolate + NADPH. The enzyme catalyses (6R)-5,10-methenyltetrahydrofolate + H2O = (6R)-10-formyltetrahydrofolate + H(+). It carries out the reaction (6S)-5,6,7,8-tetrahydrofolate + formate + ATP = (6R)-10-formyltetrahydrofolate + ADP + phosphate. The protein operates within one-carbon metabolism; tetrahydrofolate interconversion. In terms of biological role, cytoplasmic isozyme of C-1-tetrahydrofolate synthase. The trifunctional enzyme catalyzes the interconversion of the one-carbon derivatives of tetrahydrofolate (THF) between different oxidation states by the enzymatic activities 10-formyltetrahydrofolate synthetase, 5,lO-methenyltetrahydrofolate cyclohydrolase, and 5,lO-methylenetetrahydrofolate dehydrogenase. Involved in the generation of one-carbon intermediates in the biosynthesis of the purine bases. The chain is C-1-tetrahydrofolate synthase, cytoplasmic (ADE3) from Saccharomyces cerevisiae (strain ATCC 204508 / S288c) (Baker's yeast).